The following is a 138-amino-acid chain: Sec-independent protein translocase protein TatB (138 aa).

The helical transmembrane segment at 1–21 (MFDIGATELLVIAIVAILVIG) threads the bilayer. Positions 74–138 (MAKHPADQMQ…EPRLPLEGRD (65 aa)) are disordered. A compositionally biased stretch (low complexity) spans 83 to 97 (QPLDAPDPALSAAEA). Basic and acidic residues predominate over residues 98–138 (RAAHTEAAKPARAAEETQADRASADEHPAASEPRLPLEGRD).

The protein belongs to the TatB family. In terms of assembly, the Tat system comprises two distinct complexes: a TatABC complex, containing multiple copies of TatA, TatB and TatC subunits, and a separate TatA complex, containing only TatA subunits. Substrates initially bind to the TatABC complex, which probably triggers association of the separate TatA complex to form the active translocon.

The protein resides in the cell inner membrane. Functionally, part of the twin-arginine translocation (Tat) system that transports large folded proteins containing a characteristic twin-arginine motif in their signal peptide across membranes. Together with TatC, TatB is part of a receptor directly interacting with Tat signal peptides. TatB may form an oligomeric binding site that transiently accommodates folded Tat precursor proteins before their translocation. This chain is Sec-independent protein translocase protein TatB, found in Erythrobacter litoralis (strain HTCC2594).